The chain runs to 1372 residues: uncharacterized protein (1372 aa).

The interval 1-67 (MEATDQEVML…PPAPSKNPMQ (67 aa)) is disordered. The span at 17–28 (MSTSATSSTNGG) shows a compositional bias: polar residues. Residues 75–143 (NLYQTAQEQL…LEEHDRLRRK (69 aa)) adopt a coiled-coil conformation. Disordered regions lie at residues 178–199 (NDLS…LSGD), 238–287 (HINR…QASS), 380–414 (EVSN…EVRR), 427–447 (QSLE…VPVP), and 486–531 (EERM…DSGI). Low complexity-rich tracts occupy residues 184-198 (GIGT…SLSG) and 238-251 (HINR…HGNG). Polar residues-rich tracts occupy residues 257 to 287 (TGPS…QASS) and 399 to 408 (TNGNSATTAP). A coiled-coil region spans residues 409-438 (KSEVRRLSGDISSIRDRMQSLEQQRKAFSS). Residues 486–499 (EERMRQQQQKEKHS) show a composition bias toward basic and acidic residues. Residues 514-523 (ALIIEEPPVA) show a composition bias toward low complexity. Residues 539–580 (LQQQQQLNAAIAALALEERQLEEAANAVNQIEAEFDELTDLH) adopt a coiled-coil conformation. A compositionally biased stretch (low complexity) spans 652–673 (VSKSGPTPNPTSTPNMVSSSPN). 5 disordered regions span residues 652 to 679 (VSKS…LRRK), 799 to 820 (SRQL…RSEH), 860 to 897 (SQSD…PKRV), 1151 to 1181 (SSQM…PIPK), and 1231 to 1250 (SPPS…SPTK). Polar residues-rich tracts occupy residues 860–871 (SQSDSKSLTSPI) and 1151–1160 (SSQMMKTSLP).

This is an uncharacterized protein from Drosophila melanogaster (Fruit fly).